The sequence spans 385 residues: Branched-chain-amino-acid aminotransferase, cytosolic (385 aa).

An N6-(pyridoxal phosphate)lysine modification is found at K221.

The protein belongs to the class-IV pyridoxal-phosphate-dependent aminotransferase family. As to quaternary structure, homodimer. It depends on pyridoxal 5'-phosphate as a cofactor. Expressed in muscles.

It localises to the cytoplasm. It carries out the reaction L-leucine + 2-oxoglutarate = 4-methyl-2-oxopentanoate + L-glutamate. The enzyme catalyses L-isoleucine + 2-oxoglutarate = (S)-3-methyl-2-oxopentanoate + L-glutamate. It catalyses the reaction L-valine + 2-oxoglutarate = 3-methyl-2-oxobutanoate + L-glutamate. Catalyzes the first reaction in the catabolism of the essential branched chain amino acids leucine, isoleucine, and valine. The sequence is that of Branched-chain-amino-acid aminotransferase, cytosolic (BCAT1) from Ovis aries (Sheep).